We begin with the raw amino-acid sequence, 150 residues long: Large ribosomal subunit protein bL9 (150 aa).

This sequence belongs to the bacterial ribosomal protein bL9 family.

Its function is as follows. Binds to the 23S rRNA. This is Large ribosomal subunit protein bL9 from Clavibacter sepedonicus (Clavibacter michiganensis subsp. sepedonicus).